Consider the following 499-residue polypeptide: Zinc finger protein PLAG1 (499 aa).

The tract at residues 1–33 (MATVIPGDLSEVRDTQKAPSGKRKRGESKPRKN) is disordered. The segment at 2 to 84 (ATVIPGDLSE…SKYKLQRHMA (83 aa)) is interaction with KPNA2. The Nuclear localization signal motif lies at 22–25 (KRKR). 7 consecutive C2H2-type zinc fingers follow at residues 34–56 (FPCQ…SFSH), 62–86 (YKCT…MATH), 92–114 (HKCN…LHTH), 121–143 (FKCE…LALH), 150–172 (LTCK…LKSH), 185–207 (HQCE…MVVH), and 213–236 (FLCQ…KKSH). Residues 41–242 (KAFNSVEKLK…KKSHNQELLK (202 aa)) are decreased nuclear import with localization in the nucleus but also in the cytoplasm. Residues 243–383 (VKTEPVDFLD…SQASSSKLGL (141 aa)) are repression domain; contains 3 sumoylation motifs and massively decrease transcription activity. The tract at residues 243–499 (VKTEPVDFLD…TLPRFHQAFQ (257 aa)) is activates transcription; Inhibition of nuclear import due to lack of NLS and KPNA2 interaction. Glycyl lysine isopeptide (Lys-Gly) (interchain with G-Cter in SUMO) cross-links involve residues Lys244 and Lys263. The tract at residues 364 to 400 (QGGAPSSSQDSQASSSKLGLEPQSGSPDDGAGDLSLS) is disordered. Residues 369–379 (SSSQDSQASSS) show a composition bias toward low complexity. A massively activates transcription region spans residues 384–499 (EPQSGSPDDG…TLPRFHQAFQ (116 aa)).

It belongs to the krueppel C2H2-type zinc-finger protein family. Interacts with KPNA2, which escorts protein to the nucleus via interaction with nuclear localization signal. Interacts with E3 SUMO-protein ligase PIAS1, PIAS2 and PIAS4. In terms of processing, sumoylated with SUMO1; which inhibits transcriptional activity, but does not affect nuclear localization. Blockers of sumoylation pathway such as SENP3 and inactive UBE2I increases transcriptional capacity. Sumoylation is increased in the presence of PIAS1. Post-translationally, acetylated by lysine acetyltransferase EP300; which activates transcriptional capacity. Lysine residues that are sumoylated also seem to be target for acetylation. As to expression, expressed in heart, spleen, lung, kidney, brain, testis and epididymis but not in salivary glands.

It localises to the nucleus. Its function is as follows. Transcription factor whose activation results in up-regulation of target genes, such as IGFII, leading to uncontrolled cell proliferation: when overexpressed in cultured cells, higher proliferation rate and transformation are observed. Other target genes such as CRLF1, CRABP2, CRIP2, PIGF are strongly induced in cells with PLAG1 induction. Proto-oncogene whose ectopic expression can trigger the development of pleomorphic adenomas of the salivary gland and lipoblastomas. Cooperates with CBFB-MYH11. This Rattus norvegicus (Rat) protein is Zinc finger protein PLAG1 (Plag1).